Reading from the N-terminus, the 336-residue chain is Holliday junction branch migration complex subunit RuvB (336 aa).

Residues 1–182 (MKERIVNLET…FGMSFRMQFY (182 aa)) form a large ATPase domain (RuvB-L) region. Residues L21, R22, G63, K66, T67, S68, 129-131 (EDF), R172, Y182, and R219 contribute to the ATP site. A Mg(2+)-binding site is contributed by T67. The interval 183–253 (NPSELALIIK…ITLHALNELG (71 aa)) is small ATPAse domain (RuvB-S). A head domain (RuvB-H) region spans residues 256 to 336 (ELGFDEADLA…IPTLNPQTLF (81 aa)). Residues R310 and R315 each coordinate DNA.

This sequence belongs to the RuvB family. As to quaternary structure, homohexamer. Forms an RuvA(8)-RuvB(12)-Holliday junction (HJ) complex. HJ DNA is sandwiched between 2 RuvA tetramers; dsDNA enters through RuvA and exits via RuvB. An RuvB hexamer assembles on each DNA strand where it exits the tetramer. Each RuvB hexamer is contacted by two RuvA subunits (via domain III) on 2 adjacent RuvB subunits; this complex drives branch migration. In the full resolvosome a probable DNA-RuvA(4)-RuvB(12)-RuvC(2) complex forms which resolves the HJ.

It is found in the cytoplasm. The enzyme catalyses ATP + H2O = ADP + phosphate + H(+). Functionally, the RuvA-RuvB-RuvC complex processes Holliday junction (HJ) DNA during genetic recombination and DNA repair, while the RuvA-RuvB complex plays an important role in the rescue of blocked DNA replication forks via replication fork reversal (RFR). RuvA specifically binds to HJ cruciform DNA, conferring on it an open structure. The RuvB hexamer acts as an ATP-dependent pump, pulling dsDNA into and through the RuvAB complex. RuvB forms 2 homohexamers on either side of HJ DNA bound by 1 or 2 RuvA tetramers; 4 subunits per hexamer contact DNA at a time. Coordinated motions by a converter formed by DNA-disengaged RuvB subunits stimulates ATP hydrolysis and nucleotide exchange. Immobilization of the converter enables RuvB to convert the ATP-contained energy into a lever motion, pulling 2 nucleotides of DNA out of the RuvA tetramer per ATP hydrolyzed, thus driving DNA branch migration. The RuvB motors rotate together with the DNA substrate, which together with the progressing nucleotide cycle form the mechanistic basis for DNA recombination by continuous HJ branch migration. Branch migration allows RuvC to scan DNA until it finds its consensus sequence, where it cleaves and resolves cruciform DNA. The protein is Holliday junction branch migration complex subunit RuvB of Helicobacter pylori (strain ATCC 700392 / 26695) (Campylobacter pylori).